Reading from the N-terminus, the 143-residue chain is Large ribosomal subunit protein uL15 (143 aa).

Basic residues-rich tracts occupy residues 1–13 and 23–38; these read MIRKSKKITKMRG and KKHRGAGHRGGRGNAG. A disordered region spans residues 1-38; sequence MIRKSKKITKMRGSRTCGYGEAKKHRGAGHRGGRGNAG.

Belongs to the universal ribosomal protein uL15 family. As to quaternary structure, part of the 50S ribosomal subunit.

Its function is as follows. Binds to the 23S rRNA. The sequence is that of Large ribosomal subunit protein uL15 from Methanococcus maripaludis (strain C6 / ATCC BAA-1332).